Reading from the N-terminus, the 143-residue chain is Small ribosomal subunit protein eS19y (143 aa).

Belongs to the eukaryotic ribosomal protein eS19 family.

The polypeptide is Small ribosomal subunit protein eS19y (RPS19B) (Arabidopsis thaliana (Mouse-ear cress)).